Reading from the N-terminus, the 262-residue chain is Type III pantothenate kinase (262 aa).

6-13 (DAGNTNMV) is an ATP binding site. Substrate contacts are provided by residues Y100 and 107–110 (GADR). Residue D109 is the Proton acceptor of the active site. D129 contributes to the K(+) binding site. T132 contacts ATP. Position 184 (T184) interacts with substrate.

This sequence belongs to the type III pantothenate kinase family. Homodimer. The cofactor is NH4(+). K(+) serves as cofactor.

The protein localises to the cytoplasm. The catalysed reaction is (R)-pantothenate + ATP = (R)-4'-phosphopantothenate + ADP + H(+). The protein operates within cofactor biosynthesis; coenzyme A biosynthesis; CoA from (R)-pantothenate: step 1/5. Functionally, catalyzes the phosphorylation of pantothenate (Pan), the first step in CoA biosynthesis. The chain is Type III pantothenate kinase from Clostridium tetani (strain Massachusetts / E88).